Reading from the N-terminus, the 492-residue chain is 3-octaprenyl-4-hydroxybenzoate carboxy-lyase (492 aa).

N177 is a Mn(2+) binding site. Prenylated FMN-binding positions include 180–182 (IYR), 194–196 (RWL), and 199–200 (RG). E243 is a Mn(2+) binding site. Residue D292 is the Proton donor of the active site.

It belongs to the UbiD family. Homohexamer. Prenylated FMN is required as a cofactor. It depends on Mn(2+) as a cofactor.

Its subcellular location is the cell membrane. The catalysed reaction is a 4-hydroxy-3-(all-trans-polyprenyl)benzoate + H(+) = a 2-(all-trans-polyprenyl)phenol + CO2. It participates in cofactor biosynthesis; ubiquinone biosynthesis. Its function is as follows. Catalyzes the decarboxylation of 3-octaprenyl-4-hydroxy benzoate to 2-octaprenylphenol, an intermediate step in ubiquinone biosynthesis. The chain is 3-octaprenyl-4-hydroxybenzoate carboxy-lyase from Neisseria meningitidis serogroup B (strain ATCC BAA-335 / MC58).